The chain runs to 145 residues: Cuticle protein 65 (145 aa).

7 consecutive repeat copies span residues 27–30 (AAPA), 33–37 (AAPAV), 39–42 (AAPA), 86–89 (AAPV), 92–95 (AAPA), 98–101 (AAPA), and 123–126 (AAPA).

Its function is as follows. Component of the cuticle of migratory locust which contains more than 100 different structural proteins. The sequence is that of Cuticle protein 65 from Locusta migratoria (Migratory locust).